Consider the following 140-residue polypeptide: Nucleoside diphosphate kinase (140 aa).

ATP contacts are provided by lysine 11, phenylalanine 59, arginine 87, threonine 93, arginine 104, and asparagine 114. Histidine 117 serves as the catalytic Pros-phosphohistidine intermediate.

This sequence belongs to the NDK family. Homotetramer. Mg(2+) serves as cofactor.

Its subcellular location is the cytoplasm. The catalysed reaction is a 2'-deoxyribonucleoside 5'-diphosphate + ATP = a 2'-deoxyribonucleoside 5'-triphosphate + ADP. The enzyme catalyses a ribonucleoside 5'-diphosphate + ATP = a ribonucleoside 5'-triphosphate + ADP. Its function is as follows. Major role in the synthesis of nucleoside triphosphates other than ATP. The ATP gamma phosphate is transferred to the NDP beta phosphate via a ping-pong mechanism, using a phosphorylated active-site intermediate. The protein is Nucleoside diphosphate kinase of Francisella tularensis subsp. tularensis (strain SCHU S4 / Schu 4).